The primary structure comprises 138 residues: Large ribosomal subunit protein uL16 (138 aa).

Residues 1-13 show a composition bias toward basic residues; sequence MLQPKRRKYRKEQ. The disordered stretch occupies residues 1 to 24; it reads MLQPKRRKYRKEQKGRNTGKATRG.

Belongs to the universal ribosomal protein uL16 family. In terms of assembly, part of the 50S ribosomal subunit.

Its function is as follows. Binds 23S rRNA and is also seen to make contacts with the A and possibly P site tRNAs. This chain is Large ribosomal subunit protein uL16, found in Burkholderia multivorans (strain ATCC 17616 / 249).